The sequence spans 402 residues: Phosphomevalonate dehydratase large subunit (402 aa).

5 residues coordinate (R)-5-phosphomevalonate: Gly48, Ala49, Ser50, Asn79, and Pro80. A [4Fe-4S] cluster-binding site is contributed by Cys122. Positions 145 and 146 each coordinate (R)-5-phosphomevalonate. Residues Cys297 and Cys356 each contribute to the [4Fe-4S] cluster site. Lys377 is a (R)-5-phosphomevalonate binding site.

This sequence belongs to the AcnX type II large subunit family. As to quaternary structure, heterodimer composed of a large subunit (PMDh-L) and a small subunit (PMDh-S). [4Fe-4S] cluster serves as cofactor.

It carries out the reaction (R)-5-phosphomevalonate = (2E)-3-methyl-5-phosphooxypent-2-enoate + H2O. It participates in isoprenoid biosynthesis; isopentenyl diphosphate biosynthesis via mevalonate pathway. Neither the addition of 1 mM Mg(2+) nor 1 mM Mn(2+) has a significant effect on the activity, whereas Zn(2+) causes almost complete inactivation. Strongly inhibited by H(2)O(2), but not by EDTA or iodoacetamide. In terms of biological role, component of a hydro-lyase that catalyzes the dehydration of mevalonate 5-phosphate (MVA5P) to form trans-anhydromevalonate 5-phosphate (tAHMP). Involved in the archaeal mevalonate (MVA) pathway, which provides fundamental precursors for isoprenoid biosynthesis, such as isopentenyl diphosphate (IPP) and dimethylallyl diphosphate (DMAPP). The sequence is that of Phosphomevalonate dehydratase large subunit from Aeropyrum pernix (strain ATCC 700893 / DSM 11879 / JCM 9820 / NBRC 100138 / K1).